A 677-amino-acid polypeptide reads, in one-letter code: Penicillin-binding protein activator LpoA (677 aa).

A signal peptide spans 1–26; that stretch reads MLPSKIVRHKAGRFVPVLLAGLILAA. A lipid anchor (N-palmitoyl cysteine) is attached at Cys-27. The S-diacylglycerol cysteine moiety is linked to residue Cys-27. The disordered stretch occupies residues 309–359; sequence QPADANAVVSPSANPAAAQQSGTAQQPATTQQQPQQQPAAEPASNAQVKVY. The span at 313-355 shows a compositional bias: low complexity; it reads ANAVVSPSANPAAAQQSGTAQQPATTQQQPQQQPAAEPASNAQ.

This sequence belongs to the LpoA family. In terms of assembly, interacts with PBP1a.

The protein localises to the cell outer membrane. Functionally, regulator of peptidoglycan synthesis that is essential for the function of penicillin-binding protein 1A (PBP1a). The sequence is that of Penicillin-binding protein activator LpoA from Pantoea ananatis (strain LMG 20103).